Consider the following 158-residue polypeptide: Low molecular weight phosphotyrosine protein phosphatase (158 aa).

Ala2 is subject to N-acetylalanine. Catalysis depends on Cys13, which acts as the Nucleophile. Residue Arg19 is part of the active site. The active-site Proton donor is the Asp130. A phosphotyrosine mark is found at Tyr132 and Tyr133.

Belongs to the low molecular weight phosphotyrosine protein phosphatase family. As to quaternary structure, interacts with EPHA2; dephosphorylates EPHA2. Interacts with EPHB1. Interacts with the SH3 domain of SPTAN1. In terms of processing, phosphorylated by LCK. Phosphorylation at Tyr-132 increases its phosphatase activity.

The protein localises to the cytoplasm. The catalysed reaction is O-phospho-L-tyrosyl-[protein] + H2O = L-tyrosyl-[protein] + phosphate. It catalyses the reaction a phosphate monoester + H2O = an alcohol + phosphate. Inhibited by sulfhydryl reagents. In terms of biological role, acts on tyrosine phosphorylated proteins, low-MW aryl phosphates and natural and synthetic acyl phosphates with differences in substrate specificity between isoform 1 and isoform 2. The polypeptide is Low molecular weight phosphotyrosine protein phosphatase (ACP1) (Sus scrofa (Pig)).